Here is a 167-residue protein sequence, read N- to C-terminus: uncharacterized protein (167 aa).

A helical transmembrane segment spans residues 4–24; it reads IIGLFFIIILIVINISILAYD.

The protein resides in the membrane. This is an uncharacterized protein from Rickettsia prowazekii (strain Madrid E).